Reading from the N-terminus, the 391-residue chain is Multidrug resistance protein MdtL (391 aa).

Topologically, residues 1-3 (MSR) are cytoplasmic. A helical transmembrane segment spans residues 4–24 (FLICSFALVLLYPAGIDMYLV). The Periplasmic portion of the chain corresponds to 25–37 (GLPRIAADLNASE). The chain crosses the membrane as a helical span at residues 38 to 58 (AQLHIAFSVYLAGMAAAMLFA). The Cytoplasmic portion of the chain corresponds to 59 to 75 (GKMADRSGRKPVAIPGS). Residues 76-96 (ALFIIASVFCSLAETSTLFLA) form a helical membrane-spanning segment. The Periplasmic segment spans residues 97 to 98 (GR). A helical transmembrane segment spans residues 99 to 119 (FLQGLGAGCCYVVAFAILRDT). At 120–130 (LDDRRRAKVLS) the chain is on the cytoplasmic side. Residues 131-151 (LLNGITCIIPVLAPVLGHLIM) form a helical membrane-spanning segment. Residues 152 to 157 (LKFPWQ) lie on the Periplasmic side of the membrane. The chain crosses the membrane as a helical span at residues 158 to 178 (SLFWAMAMMGIAVLMLSLFIL). The Cytoplasmic segment spans residues 179 to 202 (KETRPASPAASDKPRENSESLLNR). Residues 203-222 (FFLSRVVITTLSVSVILTFV) traverse the membrane as a helical segment. Topologically, residues 223-244 (NTSPVLLMEIMGFERGEYATIM) are periplasmic. Residues 245–265 (ALTAGVSMTFSFSTPFALGIF) form a helical membrane-spanning segment. Over 266–268 (KPR) the chain is Cytoplasmic. A helical transmembrane segment spans residues 269 to 289 (TLMITSQVLFLAAGITLAVSP). At 290-292 (SHA) the chain is on the periplasmic side. A helical membrane pass occupies residues 293-313 (VSLFGITLICAGFSVGFGVAM). Over 314 to 330 (SQALGPFSLRAGVASST) the chain is Cytoplasmic. Residues 331-351 (LGIAQVCGSSLWIWLAAVVGI) traverse the membrane as a helical segment. Topologically, residues 352–355 (GAWN) are periplasmic. The chain crosses the membrane as a helical span at residues 356-376 (MLIGILIACSIVSLLLIMFVA). The Cytoplasmic segment spans residues 377 to 391 (PGRPVAAHEEIHHHA).

The protein belongs to the major facilitator superfamily. DHA1 family. MdtL (TC 2.A.1.2.22) subfamily.

It localises to the cell inner membrane. The sequence is that of Multidrug resistance protein MdtL from Shigella flexneri serotype 5b (strain 8401).